The primary structure comprises 138 residues: Small ribosomal subunit protein bS6 (138 aa).

Residues 94 to 138 (VKQDGPLPTPKPTSKENEPEKEEVKPTEEKTESPSKDEKKEDSKE) form a disordered region. Basic and acidic residues predominate over residues 106-138 (TSKENEPEKEEVKPTEEKTESPSKDEKKEDSKE).

This sequence belongs to the bacterial ribosomal protein bS6 family.

Binds together with bS18 to 16S ribosomal RNA. This is Small ribosomal subunit protein bS6 from Prochlorococcus marinus (strain NATL2A).